We begin with the raw amino-acid sequence, 412 residues long: MTDTNELRKVLHRFRSQQEKAEFSVNLVPSENKLSPLAQLPLRSDYYNRYFFNDALDPGFWQFRGGQDVAEMETELTVDHLSRLARAPHVNERPISGLSAMMIAMAGLGGKPGGTVVSIDAASGGHYATASMARRLGFESATVPVVRGQVDEQRLEQVLCRHEPELIYLDLQNSRHELEVSRVADLVGRHSRQTLLHVDCSHTMGLVLGGALGNPLDAGANTMGGSTHKTFPGPHKGVLFTRTPELHQRMREAQFTMLSSHHFAETLALGLASAEFSHFGPAYAEQVIGNAQLFSKLLASEGFDVATDEDGHTTSTHQIWVKIGDAEQTDRISQSLYDHGIRVNVQVDLPGMPGPVLRLGISELTFVGGREAAVHALAREFSNARAGVRRDGSGSRRVREQCGSPFHFVDYP.

N6-(pyridoxal phosphate)lysine is present on K229.

The protein belongs to the SHMT family. Requires pyridoxal 5'-phosphate as cofactor.

It catalyses the reaction uridine-5'-aldehyde + L-threonine = (5'S,6'S)-C-glycyluridine + acetaldehyde. The protein operates within antibiotic biosynthesis. Transaldolase involved in the biosynthesis of the capuramycin-type nucleoside antibiotic A-102395. Catalyzes the condensation of L-threonine and uridine-5'-aldehyde to form 5'-C-glycyluridine (GlyU). The polypeptide is L-threonine:uridine-5'-aldehyde transaldolase (Amycolatopsis sp).